A 190-amino-acid chain; its full sequence is UPF0301 protein Pden_0436 (190 aa).

This sequence belongs to the UPF0301 (AlgH) family.

In Paracoccus denitrificans (strain Pd 1222), this protein is UPF0301 protein Pden_0436.